Here is a 622-residue protein sequence, read N- to C-terminus: 1,4-alpha-glucan branching enzyme GlgB (622 aa).

The active-site Nucleophile is the Asp-300. Glu-351 (proton donor) is an active-site residue.

It belongs to the glycosyl hydrolase 13 family. GlgB subfamily. Monomer.

The enzyme catalyses Transfers a segment of a (1-&gt;4)-alpha-D-glucan chain to a primary hydroxy group in a similar glucan chain.. The protein operates within glycan biosynthesis; glycogen biosynthesis. Its function is as follows. Catalyzes the formation of the alpha-1,6-glucosidic linkages in glycogen by scission of a 1,4-alpha-linked oligosaccharide from growing alpha-1,4-glucan chains and the subsequent attachment of the oligosaccharide to the alpha-1,6 position. This is 1,4-alpha-glucan branching enzyme GlgB from Streptococcus agalactiae serotype V (strain ATCC BAA-611 / 2603 V/R).